We begin with the raw amino-acid sequence, 370 residues long: Anhydro-N-acetylmuramic acid kinase (370 aa).

G13–D20 contacts ATP.

Belongs to the anhydro-N-acetylmuramic acid kinase family.

The catalysed reaction is 1,6-anhydro-N-acetyl-beta-muramate + ATP + H2O = N-acetyl-D-muramate 6-phosphate + ADP + H(+). The protein operates within amino-sugar metabolism; 1,6-anhydro-N-acetylmuramate degradation. It functions in the pathway cell wall biogenesis; peptidoglycan recycling. In terms of biological role, catalyzes the specific phosphorylation of 1,6-anhydro-N-acetylmuramic acid (anhMurNAc) with the simultaneous cleavage of the 1,6-anhydro ring, generating MurNAc-6-P. Is required for the utilization of anhMurNAc either imported from the medium or derived from its own cell wall murein, and thus plays a role in cell wall recycling. The protein is Anhydro-N-acetylmuramic acid kinase of Shewanella denitrificans (strain OS217 / ATCC BAA-1090 / DSM 15013).